The chain runs to 761 residues: 5-methyltetrahydropteroyltriglutamate--homocysteine methyltransferase (761 aa).

5-methyltetrahydropteroyltri-L-glutamate-binding positions include 16–19 (RELK) and Lys-118. L-homocysteine is bound by residues 436–438 (IGS) and Glu-489. L-methionine contacts are provided by residues 436–438 (IGS) and Glu-489. Residues 520–521 (RC) and Trp-566 contribute to the 5-methyltetrahydropteroyltri-L-glutamate site. An L-homocysteine-binding site is contributed by Asp-604. Residue Asp-604 coordinates L-methionine. Glu-610 provides a ligand contact to 5-methyltetrahydropteroyltri-L-glutamate. The Zn(2+) site is built by His-646, Cys-648, and Glu-670. The active-site Proton donor is the His-699. Cys-731 serves as a coordination point for Zn(2+).

Belongs to the vitamin-B12 independent methionine synthase family. It depends on Zn(2+) as a cofactor.

It catalyses the reaction 5-methyltetrahydropteroyltri-L-glutamate + L-homocysteine = tetrahydropteroyltri-L-glutamate + L-methionine. It functions in the pathway amino-acid biosynthesis; L-methionine biosynthesis via de novo pathway; L-methionine from L-homocysteine (MetE route): step 1/1. Its function is as follows. Catalyzes the transfer of a methyl group from 5-methyltetrahydrofolate to homocysteine resulting in methionine formation. The protein is 5-methyltetrahydropteroyltriglutamate--homocysteine methyltransferase of Vibrio cholerae serotype O1 (strain ATCC 39315 / El Tor Inaba N16961).